We begin with the raw amino-acid sequence, 501 residues long: Aldehyde dehydrogenase, cytosolic 1 (501 aa).

At S2 the chain carries N-acetylserine. Residues K91 and K128 each carry the N6-acetyllysine modification. NAD(+) is bound at residue 246-251; it reads GSTEVG. Position 252 is an N6-acetyllysine (K252). E269 serves as the catalytic Proton acceptor. The active-site Nucleophile is the C303. Residues K353, K367, and K410 each carry the N6-acetyllysine modification. S413 carries the phosphoserine modification. Residues K419 and K435 each carry the N6-acetyllysine modification.

The protein belongs to the aldehyde dehydrogenase family. In terms of assembly, homotetramer. As to expression, highest level in liver, high level in lung, low level in kidney and testis.

The protein localises to the cytoplasm. The enzyme catalyses an aldehyde + NAD(+) + H2O = a carboxylate + NADH + 2 H(+). The protein operates within alcohol metabolism; ethanol degradation; acetate from ethanol: step 2/2. In terms of biological role, can oxidize benzaldehyde, propionaldehyde and acetaldehyde. No detectable activity with retinal. The chain is Aldehyde dehydrogenase, cytosolic 1 from Mus musculus (Mouse).